The sequence spans 438 residues: Probable 26S proteasome regulatory subunit rpn-6.1 (438 aa).

Over residues 1 to 10 (MRETSSREDT) the composition is skewed to basic and acidic residues. Residues 1–30 (MRETSSREDTNNIGKAPEMSGGTIMDTMTS) form a disordered region. Residues 239–408 (DFKTAFSYFY…GMLIVFEIAV (170 aa)) enclose the PCI domain.

It belongs to the proteasome subunit S9 family. Component of the lid subcomplex of the 19S proteasome regulatory particle complex (also named PA700 complex). The 26S proteasome consists of a 20S proteasome core and two 19S regulatory subunits.

In terms of biological role, component of the lid subcomplex of the 26S proteasome, a multiprotein complex involved in the ATP-dependent degradation of ubiquitinated proteins. In the complex, rpn-6.1 is required for proteasome assembly. Plays a key role in increased proteasome activity in response to proteotoxic stress: induced by daf-16, promoting enhanced assembly of the 26S proteasome and higher proteasome activity, leading to extended lifespan. The polypeptide is Probable 26S proteasome regulatory subunit rpn-6.1 (Caenorhabditis elegans).